A 155-amino-acid chain; its full sequence is Large ribosomal subunit protein eL24 (155 aa).

The tract at residues 87–155 (LELIKERRSQ…SFQKVKATSR (69 aa)) is disordered. Residues 89–129 (LIKERRSQKPSDRKAARDSKLAKDKEAKKAAKAARKAEKAK) show a composition bias toward basic and acidic residues. The segment covering 130–143 (AVASGASVVSKQQA) has biased composition (low complexity).

This sequence belongs to the eukaryotic ribosomal protein eL24 family. Component of the large ribosomal subunit. Mature ribosomes consist of a small (40S) and a large (60S) subunit. The 40S subunit contains about 32 different proteins and 1 molecule of RNA (18S). The 60S subunit contains 45 different proteins and 3 molecules of RNA (25S, 5.8S and 5S).

The protein resides in the cytoplasm. Its function is as follows. Component of the ribosome, a large ribonucleoprotein complex responsible for the synthesis of proteins in the cell. The small ribosomal subunit (SSU) binds messenger RNAs (mRNAs) and translates the encoded message by selecting cognate aminoacyl-transfer RNA (tRNA) molecules. The large subunit (LSU) contains the ribosomal catalytic site termed the peptidyl transferase center (PTC), which catalyzes the formation of peptide bonds, thereby polymerizing the amino acids delivered by tRNAs into a polypeptide chain. The nascent polypeptides leave the ribosome through a tunnel in the LSU and interact with protein factors that function in enzymatic processing, targeting, and the membrane insertion of nascent chains at the exit of the ribosomal tunnel. In Candida albicans (strain SC5314 / ATCC MYA-2876) (Yeast), this protein is Large ribosomal subunit protein eL24.